Consider the following 368-residue polypeptide: Phosphate acyltransferase (368 aa).

The interval 337 to 368 (LEQAARDASGAGQASPIAGQPAEPYAAQSSKA) is disordered.

Belongs to the PlsX family. In terms of assembly, homodimer. Probably interacts with PlsY.

It localises to the cytoplasm. It carries out the reaction a fatty acyl-[ACP] + phosphate = an acyl phosphate + holo-[ACP]. It functions in the pathway lipid metabolism; phospholipid metabolism. Its function is as follows. Catalyzes the reversible formation of acyl-phosphate (acyl-PO(4)) from acyl-[acyl-carrier-protein] (acyl-ACP). This enzyme utilizes acyl-ACP as fatty acyl donor, but not acyl-CoA. This chain is Phosphate acyltransferase, found in Paraburkholderia phytofirmans (strain DSM 17436 / LMG 22146 / PsJN) (Burkholderia phytofirmans).